The sequence spans 505 residues: MTHPSDTGSAPVLALRDVSKSFGAVRALRDVSLELFPGEVHALAGENGAGKSTLIKTLAGVHRPDAGHVLLDGAPVVFHGPGDARDAGIAVIYQEPTLFPDLSIAENIFMGRQPRRALGRIDHKATHDATAALMLRLGVELDPDRPARGLSIADQQIVEIAKALSFDARVLIMDEPTAALTGSEVARLFGVVRTLRDQGAAVLFISHRLEEIFHICARVTTLRDGAWIASEPLEGMTEDDLVRRMVGRDLDELYPKQEVTPGERALSVRRLTREGVFTDVSFEVRRGEIVALAGLVGAGRTEVARAVFGVDRWDAGEVEVDGKPLVNGAPSTAMAAGLALVPEDRRAQGLVMDMSIERNIGLTGLRTTVKAGLVDRGAERSRSLDWAVKLQVKYARIADTVATLSGGNQQKVVLAKWLATGPKVLIVDEPTRGIDVGTKAEVHRLLSQLAADGVAVLMISSDLPEVLGMADRVLVMHEGRLTAEISRTDATEETVMAAATGRAAA.

ABC transporter domains follow at residues 13–249 and 254–503; these read LALR…VGRD and YPKQ…TGRA. 45 to 52 contacts ATP; sequence GENGAGKS.

The protein belongs to the ABC transporter superfamily. Ribose importer (TC 3.A.1.2.1) family. As to quaternary structure, the complex is composed of an ATP-binding protein (RbsA), two transmembrane proteins (RbsC) and a solute-binding protein (RbsB).

The protein localises to the cell membrane. It carries out the reaction D-ribose(out) + ATP + H2O = D-ribose(in) + ADP + phosphate + H(+). In terms of biological role, part of the ABC transporter complex RbsABC involved in ribose import. Responsible for energy coupling to the transport system. In Streptomyces coelicolor (strain ATCC BAA-471 / A3(2) / M145), this protein is Ribose import ATP-binding protein RbsA 1.